A 1088-amino-acid chain; its full sequence is DNA damage-binding protein 1a (1088 aa).

The protein belongs to the DDB1 family. Component of the CDD complex, at least composed of COP10, DET1 and DDB1A. Component of the CUL4-RBX1-CDD complex. Component of the CUL4-RBX1-DDB1-PRL1 E3 ubiquitin-protein ligase complex. Component of the UV-DDB complex, which is composed of DDB1A and DDB2. Interacts with RAE1. Interacts with WDR55. Interacts with ATCSA-1. Interacts with DDA1. Binds to ASG2; the subcellular localization of this complex depends on ASG2 farnesylation status. Binds to KTN80.2/DWA3. Interacts with HTD1. Interacts directly with DHU1.

The protein resides in the cytoplasm. The protein localises to the nucleus. It participates in protein modification; protein ubiquitination. Component of light signal transduction machinery. Involved in repression of photomorphogenesis in darkness by participating in the CDD complex, a complex probably required to regulate the activity of ubiquitin conjugating enzymes (E2s). Repression of photomorphogenesis is probably mediated by ubiquitination and subsequent degradation of photomorphogenesis-promoting factors such as HY5, HYH and LAF1. Plays a role in DNA repair by forming with DDB2 the UV-damaged DNA-binding protein complex (UV-DDB). Component of the CUL4-RBX1-DDB1-PRL1 E3 ubiquitin-protein ligase complex. The sequence is that of DNA damage-binding protein 1a from Arabidopsis thaliana (Mouse-ear cress).